The primary structure comprises 469 residues: Probable acetate kinase (469 aa).

Asn-30 contributes to the Mg(2+) binding site. Lys-37 is an ATP binding site. Position 122 (Arg-122) interacts with substrate. The active-site Proton donor/acceptor is Asp-179. An ATP-binding site is contributed by 239–243 (HLGSG). Mg(2+) is bound at residue Glu-453.

The protein belongs to the acetokinase family. Requires Mg(2+) as cofactor.

The catalysed reaction is acetate + ATP = acetyl phosphate + ADP. It functions in the pathway metabolic intermediate biosynthesis; acetyl-CoA biosynthesis; acetyl-CoA from acetate: step 1/2. This chain is Probable acetate kinase, found in Neurospora crassa (strain ATCC 24698 / 74-OR23-1A / CBS 708.71 / DSM 1257 / FGSC 987).